The chain runs to 104 residues: L-rhamnose mutarotase (104 aa).

Residue Tyr-18 participates in substrate binding. The active-site Proton donor is His-22. Residues Tyr-41 and 76 to 77 (WW) each bind substrate.

This sequence belongs to the rhamnose mutarotase family. In terms of assembly, homodimer.

It localises to the cytoplasm. The enzyme catalyses alpha-L-rhamnose = beta-L-rhamnose. It functions in the pathway carbohydrate metabolism; L-rhamnose metabolism. Its function is as follows. Involved in the anomeric conversion of L-rhamnose. This Yersinia pseudotuberculosis serotype O:1b (strain IP 31758) protein is L-rhamnose mutarotase.